Reading from the N-terminus, the 590-residue chain is Potassium-transporting ATPase potassium-binding subunit (590 aa).

A run of 10 helical transmembrane segments spans residues 11–31 (IFIA…AAVF), 64–84 (TAYC…TYLI), 136–156 (GLAT…IAFI), 178–198 (ILWV…SQGV), 273–293 (MLEM…LGQM), 301–321 (WAVL…CYWA), 403–423 (AGLY…GLMV), 442–462 (AMLY…VAVL), 511–531 (LGFA…ALAG), and 552–572 (LFTV…FLPA).

Belongs to the KdpA family. In terms of assembly, the system is composed of three essential subunits: KdpA, KdpB and KdpC.

It is found in the cell inner membrane. Its function is as follows. Part of the high-affinity ATP-driven potassium transport (or Kdp) system, which catalyzes the hydrolysis of ATP coupled with the electrogenic transport of potassium into the cytoplasm. This subunit binds the periplasmic potassium ions and delivers the ions to the membrane domain of KdpB through an intramembrane tunnel. The sequence is that of Potassium-transporting ATPase potassium-binding subunit from Acidobacterium capsulatum (strain ATCC 51196 / DSM 11244 / BCRC 80197 / JCM 7670 / NBRC 15755 / NCIMB 13165 / 161).